A 560-amino-acid polypeptide reads, in one-letter code: Factor VII-activating protease (560 aa).

Positions 1-23 (MFARMSDLHVLLLMALVGKTACG) are cleaved as a signal peptide. Asparagine 54 is a glycosylation site (N-linked (GlcNAc...) asparagine). 3 EGF-like domains span residues 73–109 (QADP…NKCQ), 111–148 (VQNT…PSCS), and 150–188 (VVPV…KFCE). Intrachain disulfides connect cysteine 77-cysteine 88, cysteine 82-cysteine 97, cysteine 99-cysteine 108, cysteine 115-cysteine 125, cysteine 120-cysteine 136, cysteine 138-cysteine 147, cysteine 154-cysteine 165, cysteine 159-cysteine 176, cysteine 178-cysteine 187, cysteine 194-cysteine 276, cysteine 215-cysteine 257, cysteine 246-cysteine 271, cysteine 301-cysteine 435, cysteine 347-cysteine 363, cysteine 355-cysteine 424, cysteine 447-cysteine 515, cysteine 477-cysteine 493, and cysteine 505-cysteine 533. A Kringle domain is found at 193 to 276 (DCYVGDGYSY…KWEYCDVSAC (84 aa)). Residue asparagine 207 is glycosylated (N-linked (GlcNAc...) asparagine). One can recognise a Peptidase S1 domain in the interval 314 to 555 (IYGGFKSTAG…FLNWIKATIK (242 aa)). Active-site charge relay system residues include histidine 362 and aspartate 411. Catalysis depends on serine 509, which acts as the Charge relay system.

The protein belongs to the peptidase S1 family. As to quaternary structure, heterodimer; disulfide-linked. Heterodimer of a 50 kDa heavy and a 27 kDa light chain linked by a disulfide bond. Post-translationally, proteolytic cleavage at Gly-23 or Met-27 can give rise to the 50 kDa heavy chain (HC) and cleavage at Arg-313 or Lys-319 can give rise to the 27 kDa light chain (LC). The HC can undergo further proteolytic cleavage giving rise to a 26 kDa fragment. The LC can undergo further proteolytic cleavage at Arg-313 leading to a 17-kDa fragment and at Arg-480 leading to a 8-kDa fragment. As to expression, ubiquitously expressed.

It is found in the secreted. In terms of biological role, cleaves the alpha-chain at multiple sites and the beta-chain between 'Lys-53' and 'Lys-54' but not the gamma-chain of fibrinogen and therefore does not initiate the formation of the fibrin clot and does not cause the fibrinolysis directly. It does not cleave (activate) prothrombin and plasminogen but converts the inactive single chain urinary plasminogen activator (pro-urokinase) to the active two chain form. Activates coagulation factor VII. May function as a tumor suppressor negatively regulating cell proliferation and cell migration. This is Factor VII-activating protease from Homo sapiens (Human).